A 187-amino-acid polypeptide reads, in one-letter code: Elongation factor P (187 aa).

It belongs to the elongation factor P family.

It is found in the cytoplasm. Its pathway is protein biosynthesis; polypeptide chain elongation. Functionally, involved in peptide bond synthesis. Stimulates efficient translation and peptide-bond synthesis on native or reconstituted 70S ribosomes in vitro. Probably functions indirectly by altering the affinity of the ribosome for aminoacyl-tRNA, thus increasing their reactivity as acceptors for peptidyl transferase. The polypeptide is Elongation factor P (Synechococcus sp. (strain CC9311)).